A 306-amino-acid chain; its full sequence is MKIICLGTSAGLPTKERNTQTTILSLNPLYNEYWMFDCGEAAQHQILHTSIKLGRLTHIFISHLHGDHIFGLPGVLTSRSFQGGQDKKLTLYGPTGLKQFVDTVLTISCSHLNYPLEIIEIDHGDEFVINDIEITVGALKHGIPSFGYRIVMPDTAGNLIKEKLIAEGIAPGPVYKEFKLHEQVTLNGKIYNTKDFKTAGKKGKKLVFFGDTMPCENEVSLAENADVVVHECTYLDGDVELSHKYCHSHIDDVLSLVSSGSVKKLIINHVSNRYTTKDINRLLAEINTKTECEVFIADDFYEYDIE.

Residues His63, His65, Asp67, His68, His141, Asp211, and His269 each coordinate Zn(2+). Asp67 functions as the Proton acceptor in the catalytic mechanism.

It belongs to the RNase Z family. In terms of assembly, homodimer. Requires Zn(2+) as cofactor.

It catalyses the reaction Endonucleolytic cleavage of RNA, removing extra 3' nucleotides from tRNA precursor, generating 3' termini of tRNAs. A 3'-hydroxy group is left at the tRNA terminus and a 5'-phosphoryl group is left at the trailer molecule.. Functionally, zinc phosphodiesterase, which displays some tRNA 3'-processing endonuclease activity. Probably involved in tRNA maturation, by removing a 3'-trailer from precursor tRNA. The sequence is that of Ribonuclease Z from Macrococcus caseolyticus (strain JCSC5402) (Macrococcoides caseolyticum).